The following is a 238-amino-acid chain: Ribosomal RNA small subunit methyltransferase G (238 aa).

S-adenosyl-L-methionine is bound by residues G77, F82, 128–129 (AE), and R147.

This sequence belongs to the methyltransferase superfamily. RNA methyltransferase RsmG family.

Its subcellular location is the cytoplasm. Its function is as follows. Specifically methylates the N7 position of guanine in position 535 of 16S rRNA. In Geobacillus kaustophilus (strain HTA426), this protein is Ribosomal RNA small subunit methyltransferase G.